A 236-amino-acid polypeptide reads, in one-letter code: Protein YIPF6 (236 aa).

Position 2 is an N-acetylalanine (Ala2). Over 2–84 (AEAVESPGDP…HVLYPRKSNT (83 aa)) the chain is Cytoplasmic. Residue Ser7 is modified to Phosphoserine. Residues 85 to 105 (LLRDWDLWGPLILCVTLALML) form a helical membrane-spanning segment. The Lumenal segment spans residues 106–115 (QRGSVDSEKD). Residues 116-136 (GGPQFAEVFVIVWFGAVTITL) form a helical membrane-spanning segment. Topologically, residues 137–146 (NSKLLGGNIS) are cytoplasmic. The helical transmembrane segment at 147-167 (FFQSLCVLGYCILPLTMAMLV) threads the bilayer. Topologically, residues 168 to 184 (CRLVLLAEPGPVNFMVR) are lumenal. The chain crosses the membrane as a helical span at residues 185–205 (LFVVIIMFAWSIVASTAFLAD). Topologically, residues 206–212 (SQPPNRK) are cytoplasmic. Residues 213–233 (ALAVYPVFLFYFVISWMILTF) form a helical membrane-spanning segment. Residues 234-236 (TPQ) lie on the Lumenal side of the membrane.

Belongs to the YIP1 family. As to quaternary structure, predominantly interacts with YIPF1 or YIPF2, but may also form a ternary complex with YIPF1 and YIPF2. This interaction may stabilize YIPF1 and YIPF2.

Its subcellular location is the golgi apparatus membrane. Its function is as follows. May be required for stable YIPF1 and YIPF2 protein expression. In Bos taurus (Bovine), this protein is Protein YIPF6 (YIPF6).